Consider the following 954-residue polypeptide: Valine--tRNA ligase (954 aa).

A 'HIGH' region motif is present at residues 48-58 (PNVTGSLHMGH). The 'KMSKS' region signature appears at 560-564 (KMSKS). Lys563 contributes to the ATP binding site. Residues 883–953 (AGFINKEAEL…IQEQYKAIEA (71 aa)) adopt a coiled-coil conformation.

This sequence belongs to the class-I aminoacyl-tRNA synthetase family. ValS type 1 subfamily. Monomer.

Its subcellular location is the cytoplasm. The catalysed reaction is tRNA(Val) + L-valine + ATP = L-valyl-tRNA(Val) + AMP + diphosphate. Its function is as follows. Catalyzes the attachment of valine to tRNA(Val). As ValRS can inadvertently accommodate and process structurally similar amino acids such as threonine, to avoid such errors, it has a 'posttransfer' editing activity that hydrolyzes mischarged Thr-tRNA(Val) in a tRNA-dependent manner. This chain is Valine--tRNA ligase, found in Haemophilus influenzae (strain PittEE).